A 108-amino-acid polypeptide reads, in one-letter code: uncharacterized protein (108 aa).

3 helical membrane-spanning segments follow: residues 10-32 (SLCYFSVFIAPIIVPIVAYFVVN), 45-67 (ISHIVPFVGWLFLFIALLGGAVA), and 77-99 (FVIIGGAVIYFLVVIGIIIWNVI).

Its subcellular location is the cell membrane. This is an uncharacterized protein from Bacillus subtilis (strain 168).